The following is a 681-amino-acid chain: Probable glutamate carboxypeptidase LAMP1 (681 aa).

Topologically, residues 1–6 are cytoplasmic; the sequence is MSKSKS. Residues 7–24 form a helical; Signal-anchor for type II membrane protein membrane-spanning segment; that stretch reads LAFVIAALSYSFFSLFSS. At 25 to 681 the chain is on the extracellular side; the sequence is PPKSHYHELF…ASLVLKGELI (657 aa). Asparagine 42, asparagine 140, asparagine 166, and asparagine 299 each carry an N-linked (GlcNAc...) asparagine glycan. The interval 241-527 is catalytic; sequence SVDGCERLSD…SVLGLVALRL (287 aa). The Zn(2+) site is built by histidine 333 and aspartate 343. Catalysis depends on glutamate 380, which acts as the Nucleophile. Zn(2+) is bound by residues glutamate 381 and aspartate 409. Asparagine 441 carries N-linked (GlcNAc...) asparagine glycosylation. Zn(2+) is bound at residue histidine 493. N-linked (GlcNAc...) asparagine glycosylation occurs at asparagine 536.

Belongs to the peptidase M28 family. M28B subfamily. Requires Zn(2+) as cofactor.

It is found in the endoplasmic reticulum membrane. The catalysed reaction is Release of an unsubstituted, C-terminal glutamyl residue, typically from Ac-Asp-Glu or folylpoly-gamma-glutamates.. Acts in association with AMP1 to suppress ectopic stem cell niche formation in the shoot apical meristem (SAM) independently of cytokinin signaling pathway. In Arabidopsis thaliana (Mouse-ear cress), this protein is Probable glutamate carboxypeptidase LAMP1.